Consider the following 256-residue polypeptide: Thiazole synthase (256 aa).

The Schiff-base intermediate with DXP role is filled by K96. 1-deoxy-D-xylulose 5-phosphate contacts are provided by residues G157, 183-184 (AG), and 205-206 (NT).

Belongs to the ThiG family. In terms of assembly, homotetramer. Forms heterodimers with either ThiH or ThiS.

Its subcellular location is the cytoplasm. The enzyme catalyses [ThiS sulfur-carrier protein]-C-terminal-Gly-aminoethanethioate + 2-iminoacetate + 1-deoxy-D-xylulose 5-phosphate = [ThiS sulfur-carrier protein]-C-terminal Gly-Gly + 2-[(2R,5Z)-2-carboxy-4-methylthiazol-5(2H)-ylidene]ethyl phosphate + 2 H2O + H(+). Its pathway is cofactor biosynthesis; thiamine diphosphate biosynthesis. In terms of biological role, catalyzes the rearrangement of 1-deoxy-D-xylulose 5-phosphate (DXP) to produce the thiazole phosphate moiety of thiamine. Sulfur is provided by the thiocarboxylate moiety of the carrier protein ThiS. In vitro, sulfur can be provided by H(2)S. This chain is Thiazole synthase, found in Clostridium beijerinckii (strain ATCC 51743 / NCIMB 8052) (Clostridium acetobutylicum).